We begin with the raw amino-acid sequence, 280 residues long: tRNA dimethylallyltransferase (280 aa).

9–16 (GPTGSGKT) is a binding site for ATP. 11-16 (TGSGKT) provides a ligand contact to substrate. The segment at 34–37 (DSVS) is interaction with substrate tRNA.

Belongs to the IPP transferase family. As to quaternary structure, monomer. Mg(2+) is required as a cofactor.

The enzyme catalyses adenosine(37) in tRNA + dimethylallyl diphosphate = N(6)-dimethylallyladenosine(37) in tRNA + diphosphate. In terms of biological role, catalyzes the transfer of a dimethylallyl group onto the adenine at position 37 in tRNAs that read codons beginning with uridine, leading to the formation of N6-(dimethylallyl)adenosine (i(6)A). This chain is tRNA dimethylallyltransferase, found in Acholeplasma laidlawii (strain PG-8A).